Reading from the N-terminus, the 530-residue chain is G2/mitotic-specific cyclin-B (530 aa).

The segment at 76–152 (ARVDSHWKKQ…EPTLKREDSN (77 aa)) is disordered. Positions 121–144 (PTKTTVEPTKVTVKSSSSENVNEP) are enriched in low complexity. Serine 137 is modified (phosphoserine).

Belongs to the cyclin family. Cyclin AB subfamily. In terms of assembly, interacts with the protein kinase Cdk1 to form a serine/threonine kinase holoenzyme complex also known as maturation promoting factor (MPF). The cyclin subunit imparts substrate specificity to the complex.

Its function is as follows. Essential for the control of the cell cycle at the G2/M (mitosis) transition. In Drosophila melanogaster (Fruit fly), this protein is G2/mitotic-specific cyclin-B (CycB).